The chain runs to 716 residues: DNA ligase (716 aa).

Residues 42-46 (DAEYD), 91-92 (SL), and glutamate 125 contribute to the NAD(+) site. Lysine 127 acts as the N6-AMP-lysine intermediate in catalysis. Positions 148, 184, 300, and 324 each coordinate NAD(+). Residues cysteine 429, cysteine 432, cysteine 447, and cysteine 453 each contribute to the Zn(2+) site. A BRCT domain is found at 638–716 (TASSPIAGKI…EEAWLQLIEG (79 aa)).

This sequence belongs to the NAD-dependent DNA ligase family. LigA subfamily. The cofactor is Mg(2+). Mn(2+) serves as cofactor.

It carries out the reaction NAD(+) + (deoxyribonucleotide)n-3'-hydroxyl + 5'-phospho-(deoxyribonucleotide)m = (deoxyribonucleotide)n+m + AMP + beta-nicotinamide D-nucleotide.. In terms of biological role, DNA ligase that catalyzes the formation of phosphodiester linkages between 5'-phosphoryl and 3'-hydroxyl groups in double-stranded DNA using NAD as a coenzyme and as the energy source for the reaction. It is essential for DNA replication and repair of damaged DNA. The polypeptide is DNA ligase (Bartonella henselae (strain ATCC 49882 / DSM 28221 / CCUG 30454 / Houston 1) (Rochalimaea henselae)).